Reading from the N-terminus, the 125-residue chain is Small ribosomal subunit protein uS13 (125 aa).

The disordered stretch occupies residues 95-125; sequence GLPVNGQRTRTNARTRKGGKKTVANKKKVTK. The span at 105-125 shows a compositional bias: basic residues; the sequence is TNARTRKGGKKTVANKKKVTK.

Belongs to the universal ribosomal protein uS13 family. As to quaternary structure, part of the 30S ribosomal subunit. Forms a loose heterodimer with protein S19. Forms two bridges to the 50S subunit in the 70S ribosome.

Functionally, located at the top of the head of the 30S subunit, it contacts several helices of the 16S rRNA. In the 70S ribosome it contacts the 23S rRNA (bridge B1a) and protein L5 of the 50S subunit (bridge B1b), connecting the 2 subunits; these bridges are implicated in subunit movement. Contacts the tRNAs in the A and P-sites. This chain is Small ribosomal subunit protein uS13, found in Leptospira borgpetersenii serovar Hardjo-bovis (strain L550).